The chain runs to 360 residues: 8-hydroxygeraniol dehydrogenase (360 aa).

Zn(2+) is bound by residues Cys50, His72, Cys103, Cys106, Cys109, Cys117, and Cys166.

The protein belongs to the zinc-containing alcohol dehydrogenase family. Zn(2+) serves as cofactor. Present in seedlings and vascular tissues (at protein level). Restricted to the epidermis.

It catalyses the reaction (6E)-8-hydroxygeraniol + 2 NADP(+) = (6E)-8-oxogeranial + 2 NADPH + 2 H(+). Dehydrogenase involved in the biosynthesis of oxogeranial from hydroxygeraniol, a precursor of the terpenoid indole alkaloids such as vinblastine and vincristine. This is 8-hydroxygeraniol dehydrogenase (10HGO) from Catharanthus roseus (Madagascar periwinkle).